The primary structure comprises 240 residues: Ribosomal RNA large subunit methyltransferase E (240 aa).

Residues 1–20 (MSKAGGNKGGVKTGGRGGAG) show a composition bias toward gly residues. Residues 1 to 27 (MSKAGGNKGGVKTGGRGGAGSSNLQVR) form a disordered region. Gly-92, Trp-94, Asp-115, Asp-131, and Asp-155 together coordinate S-adenosyl-L-methionine. Catalysis depends on Lys-195, which acts as the Proton acceptor.

The protein belongs to the class I-like SAM-binding methyltransferase superfamily. RNA methyltransferase RlmE family.

It is found in the cytoplasm. The catalysed reaction is uridine(2552) in 23S rRNA + S-adenosyl-L-methionine = 2'-O-methyluridine(2552) in 23S rRNA + S-adenosyl-L-homocysteine + H(+). In terms of biological role, specifically methylates the uridine in position 2552 of 23S rRNA at the 2'-O position of the ribose in the fully assembled 50S ribosomal subunit. In Brucella anthropi (strain ATCC 49188 / DSM 6882 / CCUG 24695 / JCM 21032 / LMG 3331 / NBRC 15819 / NCTC 12168 / Alc 37) (Ochrobactrum anthropi), this protein is Ribosomal RNA large subunit methyltransferase E.